The primary structure comprises 321 residues: Lipoyl synthase (321 aa).

[4Fe-4S] cluster is bound by residues cysteine 68, cysteine 73, cysteine 79, cysteine 94, cysteine 98, cysteine 101, and serine 308. One can recognise a Radical SAM core domain in the interval 80–297 (FNHGTATFMI…KAEAMAMGFT (218 aa)).

The protein belongs to the radical SAM superfamily. Lipoyl synthase family. The cofactor is [4Fe-4S] cluster.

The protein localises to the cytoplasm. The catalysed reaction is [[Fe-S] cluster scaffold protein carrying a second [4Fe-4S](2+) cluster] + N(6)-octanoyl-L-lysyl-[protein] + 2 oxidized [2Fe-2S]-[ferredoxin] + 2 S-adenosyl-L-methionine + 4 H(+) = [[Fe-S] cluster scaffold protein] + N(6)-[(R)-dihydrolipoyl]-L-lysyl-[protein] + 4 Fe(3+) + 2 hydrogen sulfide + 2 5'-deoxyadenosine + 2 L-methionine + 2 reduced [2Fe-2S]-[ferredoxin]. The protein operates within protein modification; protein lipoylation via endogenous pathway; protein N(6)-(lipoyl)lysine from octanoyl-[acyl-carrier-protein]: step 2/2. In terms of biological role, catalyzes the radical-mediated insertion of two sulfur atoms into the C-6 and C-8 positions of the octanoyl moiety bound to the lipoyl domains of lipoate-dependent enzymes, thereby converting the octanoylated domains into lipoylated derivatives. The chain is Lipoyl synthase from Yersinia enterocolitica serotype O:8 / biotype 1B (strain NCTC 13174 / 8081).